The primary structure comprises 684 residues: Gabija protein GajB (684 aa).

A UvrD-like helicase ATP-binding domain is found at 14–351 (EQKSINAIFN…IEVINKIRND (338 aa)). 35–42 (SGAGAGKT) serves as a coordination point for ATP.

The protein belongs to the helicase family. In terms of assembly, homodimer. Interacts with GajA; 2 GajB dimers dock at opposite sides of the GajA complex to form a 4:4 GajA-GajB assembly (GajAB). GajAB interacts with Bacillus phage Phi3T Gad1 protein; this interaction forms a 4:4:8 GajAB-Gad1 complex and leads to GajAB inhibition.

Functionally, component of antiviral defense system Gabija type II, composed of GajA and GajB. Expression of Gabija type II in B.subtilis (strain BEST7003) confers resistance to phages phi105, and SpBeta. May be a helicase or contribute to GajA activation. The chain is Gabija protein GajB from Bacillus cereus (strain HuB5-5).